Here is an 80-residue protein sequence, read N- to C-terminus: UPF0154 protein MGAS10270_Spy0296 (80 aa).

Residues 4-24 (AIWILLLIVALGVGVFGGIFI) traverse the membrane as a helical segment.

It belongs to the UPF0154 family.

The protein resides in the cell membrane. The sequence is that of UPF0154 protein MGAS10270_Spy0296 from Streptococcus pyogenes serotype M2 (strain MGAS10270).